The following is a 213-amino-acid chain: Probable transaldolase (213 aa).

The active-site Schiff-base intermediate with substrate is K83.

Belongs to the transaldolase family. Type 3B subfamily.

Its subcellular location is the cytoplasm. It carries out the reaction D-sedoheptulose 7-phosphate + D-glyceraldehyde 3-phosphate = D-erythrose 4-phosphate + beta-D-fructose 6-phosphate. Its pathway is carbohydrate degradation; pentose phosphate pathway; D-glyceraldehyde 3-phosphate and beta-D-fructose 6-phosphate from D-ribose 5-phosphate and D-xylulose 5-phosphate (non-oxidative stage): step 2/3. Transaldolase is important for the balance of metabolites in the pentose-phosphate pathway. The polypeptide is Probable transaldolase (Geobacillus thermodenitrificans (strain NG80-2)).